The following is a 427-amino-acid chain: Serine hydroxymethyltransferase (427 aa).

120–122 (GHI) is a binding site for (6S)-5,6,7,8-tetrahydrofolate. Lys-226 bears the N6-(pyridoxal phosphate)lysine mark.

This sequence belongs to the SHMT family. Homodimer. Pyridoxal 5'-phosphate is required as a cofactor.

The protein resides in the cytoplasm. It functions in the pathway amino-acid biosynthesis; glycine biosynthesis; glycine from L-serine: step 1/1. Functionally, catalyzes the reversible interconversion of serine and glycine with a modified folate serving as the one-carbon carrier. Also exhibits a pteridine-independent aldolase activity toward beta-hydroxyamino acids, producing glycine and aldehydes, via a retro-aldol mechanism. The chain is Serine hydroxymethyltransferase from Pyrococcus furiosus (strain ATCC 43587 / DSM 3638 / JCM 8422 / Vc1).